The sequence spans 161 residues: Disulfide bond formation protein B (161 aa).

Residues Met-1 to Tyr-8 are Cytoplasmic-facing. The chain crosses the membrane as a helical span at residues Phe-9 to Tyr-25. The Periplasmic segment spans residues Leu-26–Phe-43. Cys-35 and Cys-38 are joined by a disulfide. Residues Ala-44–Ala-58 traverse the membrane as a helical segment. At Gln-59–Ser-63 the chain is on the cytoplasmic side. A helical membrane pass occupies residues Leu-64–Val-81. Topologically, residues Tyr-82–Ala-136 are periplasmic. Cys-94 and Cys-122 are disulfide-bonded. Residues Trp-137–Arg-155 form a helical membrane-spanning segment. Residues Arg-156–Arg-161 are Cytoplasmic-facing.

This sequence belongs to the DsbB family.

It is found in the cell inner membrane. Required for disulfide bond formation in some periplasmic proteins. Acts by oxidizing the DsbA protein. The chain is Disulfide bond formation protein B from Cupriavidus necator (strain ATCC 17699 / DSM 428 / KCTC 22496 / NCIMB 10442 / H16 / Stanier 337) (Ralstonia eutropha).